The following is a 35-amino-acid chain: Cecropin (35 aa).

Isoleucine 35 carries the post-translational modification Isoleucine amide.

It belongs to the cecropin family.

The protein localises to the secreted. Cecropins have lytic and antibacterial activity against several Gram-positive and Gram-negative bacteria. The chain is Cecropin from Bombyx mori (Silk moth).